Here is a 213-residue protein sequence, read N- to C-terminus: Uridine kinase (213 aa).

Residue 14–21 (GASASGKS) coordinates ATP.

Belongs to the uridine kinase family.

The protein resides in the cytoplasm. The catalysed reaction is uridine + ATP = UMP + ADP + H(+). It catalyses the reaction cytidine + ATP = CMP + ADP + H(+). The protein operates within pyrimidine metabolism; CTP biosynthesis via salvage pathway; CTP from cytidine: step 1/3. It functions in the pathway pyrimidine metabolism; UMP biosynthesis via salvage pathway; UMP from uridine: step 1/1. This chain is Uridine kinase, found in Vibrio cholerae serotype O1 (strain ATCC 39315 / El Tor Inaba N16961).